Here is a 474-residue protein sequence, read N- to C-terminus: PRAME family member 14 (474 aa).

5 LRR repeats span residues Q15–P38, L204–K229, L271–P294, L319–A342, and M391–A414.

The protein belongs to the PRAME family.

The protein is PRAME family member 14 of Homo sapiens (Human).